The following is a 543-amino-acid chain: CTP synthase (543 aa).

Positions 1–266 (MTKFIFVTGG…DDIICERFGI (266 aa)) are amidoligase domain. Ser13 is a CTP binding site. Ser13 contributes to the UTP binding site. Residues 14–19 (SLGKGI) and Asp71 contribute to the ATP site. Residues Asp71 and Glu140 each coordinate Mg(2+). CTP contacts are provided by residues 147 to 149 (DIE), 187 to 192 (KTKPTQ), and Lys223. Residues 187–192 (KTKPTQ) and Lys223 contribute to the UTP site. The Glutamine amidotransferase type-1 domain occupies 291 to 543 (TVAIVGKYVE…VKAAIDHQNI (253 aa)). Gly354 serves as a coordination point for L-glutamine. Cys381 (nucleophile; for glutamine hydrolysis) is an active-site residue. L-glutamine-binding positions include 382-385 (LGMQ), Glu404, and Arg471. Active-site residues include His516 and Glu518.

It belongs to the CTP synthase family. In terms of assembly, homotetramer.

The catalysed reaction is UTP + L-glutamine + ATP + H2O = CTP + L-glutamate + ADP + phosphate + 2 H(+). It catalyses the reaction L-glutamine + H2O = L-glutamate + NH4(+). The enzyme catalyses UTP + NH4(+) + ATP = CTP + ADP + phosphate + 2 H(+). Its pathway is pyrimidine metabolism; CTP biosynthesis via de novo pathway; CTP from UDP: step 2/2. Its activity is regulated as follows. Allosterically activated by GTP, when glutamine is the substrate; GTP has no effect on the reaction when ammonia is the substrate. The allosteric effector GTP functions by stabilizing the protein conformation that binds the tetrahedral intermediate(s) formed during glutamine hydrolysis. Inhibited by the product CTP, via allosteric rather than competitive inhibition. Catalyzes the ATP-dependent amination of UTP to CTP with either L-glutamine or ammonia as the source of nitrogen. Regulates intracellular CTP levels through interactions with the four ribonucleotide triphosphates. This chain is CTP synthase, found in Psychrobacter sp. (strain PRwf-1).